Consider the following 241-residue polypeptide: uncharacterized protein (241 aa).

The Cupin type-2 domain maps to S22–V78. In terms of domain architecture, HTH araC/xylS-type spans Y137–T235. 2 consecutive DNA-binding regions (H-T-H motif) follow at residues K154–T175 and L202–T225.

This is an uncharacterized protein from Bacillus subtilis (strain 168).